Here is a 228-residue protein sequence, read N- to C-terminus: Large ribosomal subunit protein uL4 (228 aa).

Disordered stretches follow at residues G45–T102 and P208–Q228. A compositionally biased stretch (low complexity) spans P208 to G221.

Belongs to the universal ribosomal protein uL4 family. In terms of assembly, part of the 50S ribosomal subunit.

Functionally, one of the primary rRNA binding proteins, this protein initially binds near the 5'-end of the 23S rRNA. It is important during the early stages of 50S assembly. It makes multiple contacts with different domains of the 23S rRNA in the assembled 50S subunit and ribosome. Forms part of the polypeptide exit tunnel. In Saccharopolyspora erythraea (strain ATCC 11635 / DSM 40517 / JCM 4748 / NBRC 13426 / NCIMB 8594 / NRRL 2338), this protein is Large ribosomal subunit protein uL4.